The primary structure comprises 53 residues: Large ribosomal subunit protein bL33A (53 aa).

This sequence belongs to the bacterial ribosomal protein bL33 family.

The sequence is that of Large ribosomal subunit protein bL33A (rpmG1) from Mycoplasma pneumoniae (strain ATCC 29342 / M129 / Subtype 1) (Mycoplasmoides pneumoniae).